The chain runs to 548 residues: Cleavage and polyadenylation specificity factor subunit 6 (548 aa).

The RRM domain occupies 81 to 161 (IALYIGNLTW…QKPIVTPCNK (81 aa)). Over residues 169–180 (MQSRKTATQAGQ) the composition is skewed to polar residues. Disordered stretches follow at residues 169–401 (MQSR…MDVV) and 473–548 (LHGI…YRHR). Pro residues-rich tracts occupy residues 221–279 (PAGP…PPVM), 294–362 (PPGP…PPPG), and 373–384 (GPPPSDPYGRPP). Basic and acidic residues-rich tracts occupy residues 385–400 (PYER…DMDV) and 490–500 (RSRERDHSRSR). Basic residues predominate over residues 501–511 (EKSRRHKSRSR). Positions 512 to 548 (DRHDDYYRERSRERERHRDRERDRDRERDREREYRHR) are enriched in basic and acidic residues.

It belongs to the RRM CPSF6/7 family. Component of the cleavage factor Im (CFIm) complex.

The protein resides in the nucleus. Its subcellular location is the nucleoplasm. The protein localises to the nucleus speckle. It is found in the cytoplasm. Its function is as follows. Component of the cleavage factor Im (CFIm) complex that functions as an activator of the pre-mRNA 3'-end cleavage and polyadenylation processing required for the maturation of pre-mRNA into functional mRNAs. CFIm contributes to the recruitment of multiprotein complexes on specific sequences on the pre-mRNA 3'-end, so called cleavage and polyadenylation signals (pA signals). Most pre-mRNAs contain multiple pA signals, resulting in alternative cleavage and polyadenylation (APA) producing mRNAs with variable 3'-end formation. The CFIm complex acts as a key regulator of cleavage and polyadenylation site choice during APA through its binding to 5'-UGUA-3' elements localized in the 3'-untranslated region (UTR) for a huge number of pre-mRNAs. Plays a role in mRNA export. This is Cleavage and polyadenylation specificity factor subunit 6 from Xenopus laevis (African clawed frog).